The sequence spans 87 residues: DNA-directed RNA polymerase subunit omega (87 aa).

The protein belongs to the RNA polymerase subunit omega family. As to quaternary structure, the RNAP catalytic core consists of 2 alpha, 1 beta, 1 beta' and 1 omega subunit. When a sigma factor is associated with the core the holoenzyme is formed, which can initiate transcription.

The catalysed reaction is RNA(n) + a ribonucleoside 5'-triphosphate = RNA(n+1) + diphosphate. In terms of biological role, promotes RNA polymerase assembly. Latches the N- and C-terminal regions of the beta' subunit thereby facilitating its interaction with the beta and alpha subunits. This chain is DNA-directed RNA polymerase subunit omega, found in Alcanivorax borkumensis (strain ATCC 700651 / DSM 11573 / NCIMB 13689 / SK2).